The sequence spans 236 residues: Uridylate kinase (236 aa).

9–12 (KISG) serves as a coordination point for ATP. Gly-51 contacts UMP. Residues Gly-52 and Arg-56 each coordinate ATP. Residues Asp-71 and 132–139 (TGNSHFTT) each bind UMP. ATP is bound by residues Tyr-166 and Asp-169.

The protein belongs to the UMP kinase family. Homohexamer.

The protein localises to the cytoplasm. It carries out the reaction UMP + ATP = UDP + ADP. It functions in the pathway pyrimidine metabolism; CTP biosynthesis via de novo pathway; UDP from UMP (UMPK route): step 1/1. With respect to regulation, inhibited by UTP. In terms of biological role, catalyzes the reversible phosphorylation of UMP to UDP. The sequence is that of Uridylate kinase from Mycoplasmoides gallisepticum (strain R(low / passage 15 / clone 2)) (Mycoplasma gallisepticum).